A 232-amino-acid polypeptide reads, in one-letter code: 7-cyano-7-deazaguanine synthase (232 aa).

7–17 lines the ATP pocket; sequence CSGGLDSVSLA. 4 residues coordinate Zn(2+): cysteine 185, cysteine 193, cysteine 196, and cysteine 199.

It belongs to the QueC family. It depends on Zn(2+) as a cofactor.

The enzyme catalyses 7-carboxy-7-deazaguanine + NH4(+) + ATP = 7-cyano-7-deazaguanine + ADP + phosphate + H2O + H(+). It functions in the pathway purine metabolism; 7-cyano-7-deazaguanine biosynthesis. Its function is as follows. Catalyzes the ATP-dependent conversion of 7-carboxy-7-deazaguanine (CDG) to 7-cyano-7-deazaguanine (preQ(0)). The chain is 7-cyano-7-deazaguanine synthase from Brucella anthropi (strain ATCC 49188 / DSM 6882 / CCUG 24695 / JCM 21032 / LMG 3331 / NBRC 15819 / NCTC 12168 / Alc 37) (Ochrobactrum anthropi).